Consider the following 115-residue polypeptide: Con-Ins T2 (115 aa).

The first 21 residues, 1-21 (MTTSFYFLLVALGLLLYVCQS), serve as a signal peptide directing secretion. Residues 22–29 (SFGNQHTR) constitute a propeptide that is removed on maturation. 3 disulfides stabilise this stretch: C38-C101, C50-C114, and C100-C105. E48 is subject to 4-carboxyglutamate. Positions 53 to 94 (KRNDAGKKRGQASPLWQRGGSLSMLKARAKRNEAFHLQRAHR) are cleaved as a propeptide — c peptide. E98 bears the 4-carboxyglutamate mark. E109 carries the 4-carboxyglutamate modification. C114 is modified (cysteine amide).

This sequence belongs to the insulin family. Heterodimer of A and B chains; disulfide-linked. Expressed by the venom gland.

It is found in the secreted. In terms of biological role, this venom insulin facilitates prey capture by rapidly inducing hypoglycemic shock. It is one of the smallest known insulin found in nature and lacks the C-terminal segment of the B chain that, in human insulin, mediates engagement of the insulin receptor (INSR) and assembly of the hormone's hexameric storage form. Despite lacking this segment, it both binds and activates human insulin receptor (long isoform (HIR-B)) with a high potency (EC(50)=15.5 nM). In vivo, intraperitoneal injection of this peptide into zebrafish lowers blood glucose with a lower potency than human insulin. In addition, when applied to water, this peptide reduces overall locomotor activity of zebrafish larvae, observed as a significant decrease in the percentage of time spent swimming and movement frequency. When tested on a mouse model of diabetes, this insulin also lowers blood glucose with a 10-fold lower potency than human insulin. The sequence is that of Con-Ins T2 from Conus tulipa (Fish-hunting cone snail).